Reading from the N-terminus, the 336-residue chain is Hdr-like menaquinol oxidoreductase cytochrome b-like subunit (336 aa).

6 helical membrane passes run alanine 4–isoleucine 24, isoleucine 60–phenylalanine 80, tryptophan 102–leucine 122, valine 145–leucine 165, histidine 184–isoleucine 204, and leucine 232–phenylalanine 252.

The protein localises to the cell membrane. Has menaquinol-oxidizing activity. The HmeC and HmeD subunits may together mediate electron transfer from menaquinol to an unidentified electron acceptor on the cytoplasmic side of the membrane. The polypeptide is Hdr-like menaquinol oxidoreductase cytochrome b-like subunit (hmeC) (Archaeoglobus profundus (strain DSM 5631 / JCM 9629 / NBRC 100127 / Av18)).